We begin with the raw amino-acid sequence, 358 residues long: Stearoyl-CoA desaturase 2 (358 aa).

The Cytoplasmic portion of the chain corresponds to 1 to 71; sequence MPAHILQEIS…EGPPPKLEYV (71 aa). Residues 14-43 are disordered; the sequence is SATTTITAPPSGGQQNGGEKFEKNPHHWGA. Basic and acidic residues predominate over residues 32-43; it reads EKFEKNPHHWGA. The helical transmembrane segment at 72–92 threads the bilayer; that stretch reads WRNIVLMALLHIGALYGITLV. Asn74 serves as a coordination point for substrate. Residues 93-96 lie on the Lumenal side of the membrane; the sequence is PSCK. The helical transmembrane segment at 97–117 threads the bilayer; sequence VYTCLFAYLYYVISALGITAG. Residues 118 to 216 lie on the Cytoplasmic side of the membrane; sequence AHRLWSHRTY…EKLVMFQRRY (99 aa). Residues His119 and His124 each coordinate Fe cation. A Histidine box-1 motif is present at residues 119–124; sequence HRLWSH. Positions 147, 154, and 155 each coordinate substrate. Fe cation contacts are provided by His156, His159, and His160. Residues 156–160 carry the Histidine box-2 motif; that stretch reads HRAHH. Arg187 and Lys188 together coordinate substrate. A helical transmembrane segment spans residues 217–236; that stretch reads YKPGLLLMCFILPTLVPWYC. The Lumenal portion of the chain corresponds to 237–240; sequence WGET. Residues 241-262 traverse the membrane as a helical segment; the sequence is FVNSLCVSTFLRYAVVLNATWL. Substrate is bound at residue Trp261. The Cytoplasmic segment spans residues 263-358; that stretch reads VNSAAHLYGY…RTGEESCKSG (96 aa). Residues His268, His297, His300, and His301 each contribute to the Fe cation site. A Histidine box-3 motif is present at residues 297–301; that stretch reads HNYHH.

This sequence belongs to the fatty acid desaturase type 1 family. It depends on Fe(2+) as a cofactor. In terms of tissue distribution, detected in brain and adipose tissue, and at much lower levels in testis. Detected in liver when rats are kept on a fat-free diet, but not when their food contains unsaturated fatty acids.

It is found in the endoplasmic reticulum membrane. The protein resides in the microsome membrane. The enzyme catalyses octadecanoyl-CoA + 2 Fe(II)-[cytochrome b5] + O2 + 2 H(+) = (9Z)-octadecenoyl-CoA + 2 Fe(III)-[cytochrome b5] + 2 H2O. The catalysed reaction is hexadecanoyl-CoA + 2 Fe(II)-[cytochrome b5] + O2 + 2 H(+) = (9Z)-hexadecenoyl-CoA + 2 Fe(III)-[cytochrome b5] + 2 H2O. Functionally, stearoyl-CoA desaturase that utilizes O(2) and electrons from reduced cytochrome b5 to introduce the first double bond into saturated fatty acyl-CoA substrates. Catalyzes the insertion of a cis double bond at the delta-9 position into fatty acyl-CoA substrates including palmitoyl-CoA and stearoyl-CoA. Gives rise to a mixture of 16:1 and 18:1 unsaturated fatty acids. Contributes to the biosynthesis of membrane phospholipids, cholesterol esters and triglycerides, especially during embryonic development and in neonates. Important for normal permeability barrier function of the skin in neonates. The sequence is that of Stearoyl-CoA desaturase 2 (Scd2) from Rattus norvegicus (Rat).